The primary structure comprises 941 residues: MLRPQLNPSSSHHHTTTTSSSSSTQLYFASSSCIASLRRPSPPSLIAGAGCRTTRRRQQGRQRVVVRCASSSAASSASEAARRGTGSSDMAPAAVVKVKAVATIKVTVEGLLNSLRPSKAIDNIRDLIGRSLFLELVSSELEAKTGKKKATVHSYAHKVDDDDHGVVTYEADFDVPTGFGPIGAVVVTNELGQEMFLEDLNLTAGDGAGNSTVLPIRCNSWVQPKSSIDEGTPGKRIFFAKAYLPGQTPAGLRSYREEDLKQKRGNGAGQREADDRVYDYDVYNDLGNPDSNGDLARPVLGGSKQFPYPRRCRTGRPPSKKDPKSETRKGNVYVPRDEEFSEVKNAQFLLKTLQSVLHAAVPAAQSALIDNLSLNLPFPSFFVIDKLFEDGVELPGVEKLGFLHSIVPRLLELLRDSPGDKILLFDTPANVQKDKFAWLRDEEFARETLAGINPYAIELVREFPLKSKLDPAVYGPAESAITADLLEEQMRRVMTVEEAISQKRLFMLDFHDLFLPYVHKIRSLKHTTMYGSRTIFFLTDDGTLRLLAIELTRPASPSQPQWRQVFTPSTDTTKSWLWRMAKAHVRAHDAGHHELITHWLRTHCAVEPYIIAANRQLSEMHPIYQLLHPHFRYTMRINALARSRLISAAGIIELSFSPQKYSMELSSVAYDKLWRFDMEALPADLVRRGMAEEDPTAEHGLRLAIEDYPFANDGLLIWDAIKTWVQAYVARFYPDADSVAGDEELQAFWTEVRTKGHGDKKDAPWWPKLDSPESLAHTLTTIVWVAAAHHAAVNFGQYDFGGYFPNRPSIARTVMPVEEPVDGAAMERFLDNPDQALRECFPSQVQATVVMAVLDVLSTHSTDEEYLGGEQTRPWNSDAAVQAAYAGFTARLKEIEGVIDGRNKDRKLKNRCGAGILPYQLMKPFSDAGVTGMGIPNSTSI.

2 disordered regions span residues 1 to 22 and 45 to 68; these read MLRP…SSSS and LIAG…VVRC. The transit peptide at 1–67 directs the protein to the chloroplast; the sequence is MLRPQLNPSS…QQGRQRVVVR (67 aa). The PLAT domain occupies 100–236; it reads AVATIKVTVE…SIDEGTPGKR (137 aa). Positions 242–941 constitute a Lipoxygenase domain; the sequence is AYLPGQTPAG…GMGIPNSTSI (700 aa). Disordered stretches follow at residues 255–274 and 288–331; these read YREE…READ and NPDS…RKGN. Residues 319–331 are compositionally biased toward basic and acidic residues; sequence SKKDPKSETRKGN. Positions 598, 603, 790, 794, and 941 each coordinate Fe cation.

The protein belongs to the lipoxygenase family. It depends on Fe cation as a cofactor.

It localises to the plastid. Its subcellular location is the chloroplast. It carries out the reaction (9Z,12Z)-octadecadienoate + O2 = (13S)-hydroperoxy-(9Z,11E)-octadecadienoate. The catalysed reaction is (9Z,12Z,15Z)-octadecatrienoate + O2 = (13S)-hydroperoxy-(9Z,11E,15Z)-octadecatrienoate. It participates in lipid metabolism; oxylipin biosynthesis. In terms of biological role, plant lipoxygenase may be involved in a number of diverse aspects of plant physiology including growth and development, pest resistance, and senescence or responses to wounding. It catalyzes the hydroperoxidation of lipids containing a cis,cis-1,4-pentadiene structure. The chain is Probable lipoxygenase 8, chloroplastic (CM-LOX2) from Oryza sativa subsp. japonica (Rice).